Consider the following 78-residue polypeptide: Small ribosomal subunit protein uS17 (78 aa).

This sequence belongs to the universal ribosomal protein uS17 family. Part of the 30S ribosomal subunit.

In terms of biological role, one of the primary rRNA binding proteins, it binds specifically to the 5'-end of 16S ribosomal RNA. The protein is Small ribosomal subunit protein uS17 of Parvibaculum lavamentivorans (strain DS-1 / DSM 13023 / NCIMB 13966).